The sequence spans 29 residues: Cytolysin Oshem 1 (29 aa).

It is found in the secreted. It localises to the nematocyst. The protein localises to the target cell membrane. Cytolysin that shows moderate hemolysis and moderate myonecrosis. In Olindias sambaquiensis (Hydromedusa), this protein is Cytolysin Oshem 1.